The chain runs to 85 residues: Toxin BmKaTX15 (85 aa).

The signal sequence occupies residues 1–19 (MNYLVFFSLALLVMTGVES). Residues 21 to 83 (RDGYIADDKN…VPIRVPGKCN (63 aa)) enclose the LCN-type CS-alpha/beta domain. Cystine bridges form between C31–C82, C35–C55, C41–C65, and C45–C67.

It belongs to the long (4 C-C) scorpion toxin superfamily. Sodium channel inhibitor family. Alpha subfamily. As to expression, expressed by the venom gland.

Its subcellular location is the secreted. In terms of biological role, alpha toxins bind voltage-independently at site-3 of sodium channels (Nav) and inhibit the inactivation of the activated channels, thereby blocking neuronal transmission. The polypeptide is Toxin BmKaTX15 (Olivierus martensii (Manchurian scorpion)).